A 530-amino-acid polypeptide reads, in one-letter code: Pentatricopeptide repeat-containing protein At3g51320 (530 aa).

PPR repeat units lie at residues 82–116, 117–151, 152–182, 183–217, 218–248, 249–283, 284–314, 315–349, 350–380, and 386–420; these read KLYC…GFVP, DSYT…GCDQ, VLPV…IPKR, DIVS…NIIS, WNIM…GFQG, NEST…FLNS, SVVI…LSIR, NKVT…MLRP, DEVT…MVDE, and NFGH…DVTP. A type E motif region spans residues 424 to 499; sequence KWANLLSSSR…IPGCGLVDLK (76 aa).

The protein belongs to the PPR family. PCMP-E subfamily.

This Arabidopsis thaliana (Mouse-ear cress) protein is Pentatricopeptide repeat-containing protein At3g51320.